We begin with the raw amino-acid sequence, 195 residues long: Phosphoheptose isomerase (195 aa).

Positions 36–195 (VSKVLQSGNT…IVEYNLFKME (160 aa)) constitute an SIS domain. 51-53 (NGG) is a substrate binding site. Residues His-60 and Glu-64 each coordinate Zn(2+). Residues Glu-64, 95–96 (ND), 121–123 (STS), Ser-126, and Gln-173 each bind substrate. Zn(2+) contacts are provided by Gln-173 and His-181.

It belongs to the SIS family. GmhA subfamily. Requires Zn(2+) as cofactor.

It is found in the cytoplasm. It carries out the reaction 2 D-sedoheptulose 7-phosphate = D-glycero-alpha-D-manno-heptose 7-phosphate + D-glycero-beta-D-manno-heptose 7-phosphate. The protein operates within carbohydrate biosynthesis; D-glycero-D-manno-heptose 7-phosphate biosynthesis; D-glycero-alpha-D-manno-heptose 7-phosphate and D-glycero-beta-D-manno-heptose 7-phosphate from sedoheptulose 7-phosphate: step 1/1. Catalyzes the isomerization of sedoheptulose 7-phosphate in D-glycero-D-manno-heptose 7-phosphate. The protein is Phosphoheptose isomerase of Leptospira borgpetersenii serovar Hardjo-bovis (strain JB197).